A 207-amino-acid polypeptide reads, in one-letter code: Holliday junction branch migration complex subunit RuvA (207 aa).

Residues 1 to 65 are domain I; sequence MIGRIRGVIL…EDAQLLYGFN (65 aa). The tract at residues 66-143 is domain II; it reads QKQERALFRE…KGLNGDLFEQ (78 aa). Residues 144-158 are flexible linker; the sequence is NGDIELPASASSKAP. A domain III region spans residues 159 to 207; the sequence is SAADIEAEASAALIALGYKPQEAAKMISRVATAGADSETLIKEALRAAI.

Belongs to the RuvA family. Homotetramer. Forms an RuvA(8)-RuvB(12)-Holliday junction (HJ) complex. HJ DNA is sandwiched between 2 RuvA tetramers; dsDNA enters through RuvA and exits via RuvB. An RuvB hexamer assembles on each DNA strand where it exits the tetramer. Each RuvB hexamer is contacted by two RuvA subunits (via domain III) on 2 adjacent RuvB subunits; this complex drives branch migration. In the full resolvosome a probable DNA-RuvA(4)-RuvB(12)-RuvC(2) complex forms which resolves the HJ.

Its subcellular location is the cytoplasm. Its function is as follows. The RuvA-RuvB-RuvC complex processes Holliday junction (HJ) DNA during genetic recombination and DNA repair, while the RuvA-RuvB complex plays an important role in the rescue of blocked DNA replication forks via replication fork reversal (RFR). RuvA specifically binds to HJ cruciform DNA, conferring on it an open structure. The RuvB hexamer acts as an ATP-dependent pump, pulling dsDNA into and through the RuvAB complex. HJ branch migration allows RuvC to scan DNA until it finds its consensus sequence, where it cleaves and resolves the cruciform DNA. This is Holliday junction branch migration complex subunit RuvA from Proteus mirabilis (strain HI4320).